The following is a 105-amino-acid chain: Large ribosomal subunit protein bL21 (105 aa).

This sequence belongs to the bacterial ribosomal protein bL21 family. As to quaternary structure, part of the 50S ribosomal subunit. Contacts protein L20.

In terms of biological role, this protein binds to 23S rRNA in the presence of protein L20. This chain is Large ribosomal subunit protein bL21, found in Rickettsia prowazekii (strain Madrid E).